The sequence spans 340 residues: DNA-directed RNA polymerase subunit alpha (340 aa).

Residues Met1–Glu233 are alpha N-terminal domain (alpha-NTD). Residues Ala264–Ser340 form an alpha C-terminal domain (alpha-CTD) region.

This sequence belongs to the RNA polymerase alpha chain family. As to quaternary structure, in plastids the minimal PEP RNA polymerase catalytic core is composed of four subunits: alpha, beta, beta', and beta''. When a (nuclear-encoded) sigma factor is associated with the core the holoenzyme is formed, which can initiate transcription.

It localises to the plastid. The protein resides in the chloroplast. It carries out the reaction RNA(n) + a ribonucleoside 5'-triphosphate = RNA(n+1) + diphosphate. In terms of biological role, DNA-dependent RNA polymerase catalyzes the transcription of DNA into RNA using the four ribonucleoside triphosphates as substrates. The sequence is that of DNA-directed RNA polymerase subunit alpha from Psilotum nudum (Whisk fern).